Consider the following 912-residue polypeptide: MWTLTCQQFIALILLGTLVPSESFLCKHCFRKNLEKVHESFRDILSPPIFGVNPQPLIEVQQPKVTPKPESSQVIHVHQPQVILKPIYYPKVDTISTKNQIGIHGPYSQYPSLLPSANLLGIPNQQLINAQDVLSDKDQKQTQVQNNNLHIRFGVSALREGRNNPSLETISRDKVDKISPALQLQLLRYADSQSQSQTQSQSASQSESNASSQFQAQEQSNRLLENPPVSESQSQSESQSQSESQKQSQSQSQRQQQIQTQLQILRQLQQKSNEQSAAQSASQIQSQRQSDSQSNLQLQEQSQSQSEQGKPIQSQIQILQGLQQKELDDKSASQSQSESKTRQEQQKQLNLQQLEELSSSLSQSRLGLGQQIQSQLQKNQLDKQFASQFQSQSKSQLEQQMQLQLQSLRQLQQKQLDEQSASQSQPQSQVAQQIQSHLQLLRLLQSRLKTQSALKSDLEQQILLQLKKLTEVQQKQLAEQPTLRPSSKSQSPGQLEQQILLQLQNLLQFQQNQLKSDTQTQSQLQESKSNSLSQSQSQSQEQLQLQRDQNLRQLEQIKLEMQNIRELLQKGKSELQTQSDSQRRIHELYQNILQLNKEKLSYQLKQLKLKELEDQKKSQAEISKGSNPSNLFIIGQLPSEGKPAPGNQGPSIEPKLVPQPGSLDKLPSGGGLIGKPASTGLYILSPDFNDLSDYRDQFRLQQELKKHQNILSLLQRRQNDIKKQQNAQLLLGQQQKEQQAQESINKQQSSSAGSSSQTKLQQDIQSTGAQGSQQGLQAGSTGLQTSSLQGTESSASQSAALQRLKEQEQLRIQTENDQKTSSSSSHSNSQNSQSSSSQSSQASQSEAQRQEAGNRNTLLLDQSSSKTQSESKSESSSQSSSHSSSQSTSNSSSNVQSKLQGESQALLNNLSG.

The signal sequence occupies residues 1-23; sequence MWTLTCQQFIALILLGTLVPSES. 4 stretches are compositionally biased toward low complexity: residues 193-220, 230-255, 271-324, and 521-544; these read QSQSQTQSQSASQSESNASSQFQAQEQS, SESQSQSESQSQSESQKQSQSQSQRQ, KSNE…GLQQ, and QSQLQESKSNSLSQSQSQSQEQLQ. Disordered regions lie at residues 193–255, 271–349, 518–544, 638–671, and 732–912; these read QSQS…SQRQ, KSNE…QKQL, TQTQSQLQESKSNSLSQSQSQSQEQLQ, PSEGKPAPGNQGPSIEPKLVPQPGSLDKLPSGGG, and GQQQ…NLSG. Low complexity-rich tracts occupy residues 732–757 and 765–785; these read GQQQKEQQAQESINKQQSSSAGSSSQ and QSTGAQGSQQGLQAGSTGLQT. Basic and acidic residues predominate over residues 803–818; that stretch reads RLKEQEQLRIQTENDQ. Over residues 821 to 845 the composition is skewed to low complexity; sequence SSSSSHSNSQNSQSSSSQSSQASQS. Residues 851 to 861 show a composition bias toward polar residues; it reads EAGNRNTLLLD. A compositionally biased stretch (low complexity) spans 862–897; the sequence is QSSSKTQSESKSESSSQSSSHSSSQSTSNSSSNVQS. The segment covering 898 to 912 has biased composition (polar residues); the sequence is KLQGESQALLNNLSG.

Post-translationally, proteolytically cleaved by the seminal metalloprotease Semp1. Cleavage appears to take place in the mated female. Detected in the male accessory glands (at protein level). Produced in the accessory glands and secreted into seminal fluid.

It localises to the secreted. Responsible for physiological and behavioral changes in mated female flies. Associates with sperm and localizes to specific regions of the female reproductive tract, including the sperm storage organs. It accelerates sperm accumulation into storage but does not mediate the entry of the first sperm into storage. Once sperm storage has initiated it seems to act as a guidance factor helping subsequent sperm move into storage, a corral concentrating sperm around the SSO entrances and/or a trigger for responses within the female that accelerate storage of sperm. The polypeptide is Accessory gland protein Acp36DE (Acp36DE) (Drosophila melanogaster (Fruit fly)).